The sequence spans 860 residues: DNA mismatch repair protein MutS (860 aa).

An ATP-binding site is contributed by 607–614; sequence GPNMSGKS.

Belongs to the DNA mismatch repair MutS family.

Its function is as follows. This protein is involved in the repair of mismatches in DNA. It is possible that it carries out the mismatch recognition step. This protein has a weak ATPase activity. This Listeria monocytogenes serotype 4b (strain CLIP80459) protein is DNA mismatch repair protein MutS.